A 126-amino-acid polypeptide reads, in one-letter code: UPF0538 protein C2orf76 homolog (126 aa).

Belongs to the UPF0538 family.

This Pongo abelii (Sumatran orangutan) protein is UPF0538 protein C2orf76 homolog.